The sequence spans 132 residues: Small ribosomal subunit protein uS8c (132 aa).

This sequence belongs to the universal ribosomal protein uS8 family. Part of the 30S ribosomal subunit.

The protein resides in the plastid. It is found in the chloroplast. Its function is as follows. One of the primary rRNA binding proteins, it binds directly to 16S rRNA central domain where it helps coordinate assembly of the platform of the 30S subunit. This Nymphaea alba (White water-lily) protein is Small ribosomal subunit protein uS8c (rps8).